The primary structure comprises 508 residues: U4/U6 small nuclear ribonucleoprotein Prp31 (508 aa).

Residues 1-45 (MSLADELLADLEEAGEEDGLYPGGEEGESDGEPGERQVDGGLEDI) form a disordered region. A compositionally biased stretch (acidic residues) spans 7–32 (LLADLEEAGEEDGLYPGGEEGESDGE). Coiled coils occupy residues 96–131 (EADP…KYSK) and 192–226 (DDEL…MSFI). Residues 226 to 344 (IAPNLSIIVG…IERKFDKWQE (119 aa)) enclose the Nop domain. 2 disordered regions span residues 345-368 (PPPV…RGGR) and 442-461 (QSMT…GTSS). Positions 362-375 (RKKRGGRRYRKMKE) match the Nuclear localization signal (NLS) motif.

It belongs to the PRP31 family. In terms of assembly, identified in the spliceosome B complex. Component of the U4/U6-U5 tri-snRNP complex. Component of some MLL1/MLL complex.

Its subcellular location is the nucleus. The protein resides in the nucleus speckle. It is found in the cajal body. In terms of biological role, involved in pre-mRNA splicing as component of the spliceosome. Required for the assembly of the U4/U5/U6 tri-snRNP complex, one of the building blocks of the spliceosome. The polypeptide is U4/U6 small nuclear ribonucleoprotein Prp31 (prpf31) (Danio rerio (Zebrafish)).